A 244-amino-acid polypeptide reads, in one-letter code: Transmembrane protein 176A (244 aa).

S42 bears the Phosphoserine mark. The next 4 helical transmembrane spans lie at 60–80 (VLVA…VLGG), 92–112 (SEGA…VAFL), 122–142 (ALMR…AIVI), and 204–224 (LLGI…VYIW).

Belongs to the TMEM176 family. Interacts with MCOLN2. As to expression, specifically expressed in lung, kidney and spleen.

The protein localises to the membrane. The protein is Transmembrane protein 176A (Tmem176a) of Mus musculus (Mouse).